The sequence spans 1244 residues: Alpha-protein kinase 1 (1244 aa).

ADP-D-glycero-beta-D-manno-heptose-binding positions include phenylalanine 61, glutamine 67, arginine 116, 150–153 (RQAR), aspartate 231, lysine 233, 236–237 (ST), and phenylalanine 295. 4 disordered regions span residues 650-675 (LQEP…TPFS), 701-737 (VRNM…THPS), 757-798 (VKDR…TEDA), and 824-848 (NWPV…DPDA). Residues 652 to 675 (EPNNDNLEPSQNQPQQQMPLTPFS) show a composition bias toward polar residues. Residues 713-726 (SRPSYRSASWSSDS) show a composition bias toward low complexity. Residues 757–771 (VKDRQGKEQGEEISE) are compositionally biased toward basic and acidic residues. Residues 787–798 (PEGETAESTEDA) show a composition bias toward acidic residues. Positions 1017–1237 (KYSKKSELWT…ICHRLSLTRP (221 aa)) constitute an Alpha-type protein kinase domain.

Belongs to the protein kinase superfamily. Alpha-type protein kinase family. ALPK subfamily. In terms of tissue distribution, highly expressed in liver. Expressed in the optic nerve and retinal pigmented epithelium. Lower expression is observed in the macula and extramacular retina.

It localises to the cytoplasm. Its subcellular location is the cytosol. It is found in the cytoskeleton. The protein localises to the spindle pole. The protein resides in the microtubule organizing center. It localises to the centrosome. Its subcellular location is the cell projection. It is found in the cilium. The enzyme catalyses L-seryl-[protein] + ATP = O-phospho-L-seryl-[protein] + ADP + H(+). It catalyses the reaction L-threonyl-[protein] + ATP = O-phospho-L-threonyl-[protein] + ADP + H(+). With respect to regulation, serine/threonine-protein kinase activity is stimulated upon ADP-D-glycero-beta-D-manno-heptose (ADP-Heptose)-binding. Its function is as follows. Serine/threonine-protein kinase that detects bacterial pathogen-associated molecular pattern metabolites (PAMPs) and initiates an innate immune response, a critical step for pathogen elimination and engagement of adaptive immunity. Specifically recognizes and binds ADP-D-glycero-beta-D-manno-heptose (ADP-Heptose), a potent PAMP present in all Gram-negative and some Gram-positive bacteria. ADP-Heptose-binding stimulates its kinase activity to phosphorylate and activate TIFA, triggering pro-inflammatory NF-kappa-B signaling. May be involved in monosodium urate monohydrate (MSU)-induced inflammation by mediating phosphorylation of unconventional myosin MYO9A. May also play a role in apical protein transport by mediating phosphorylation of unconventional myosin MYO1A. May play a role in ciliogenesis. This Homo sapiens (Human) protein is Alpha-protein kinase 1.